The sequence spans 596 residues: CRISPR-associated DNA-binding protein Cas12m (596 aa).

The tract at residues 19–53 (EVLRQQLWLAHNLREDLVSLQLAYDDDLKAIWSSY) is recognition domain (REC1-N). The segment at 54–121 (PDVAQAEDTM…RDAIAVVKDD (68 aa)) is recognition domain (REC2). 2 coiled-coil regions span residues 55–83 (DVAQ…ARIE) and 91–117 (TELT…AIAV). The recognition domain (REC1-C) stretch occupies residues 122-190 (AAERRKARSD…LRHHRFDGSG (69 aa)). The wedge domain (WED) stretch occupies residues 191-302 (TIAVQLQRQA…RAKLCVTARI (112 aa)). The tract at residues 303 to 313 (GDTEPVTSGPT) is linker. The interval 314–541 (VALHLGWRST…RDGVPVTIVA (228 aa)) is ruvC-I. Histidine 317 lines the Mg(2+) pocket. The interval 541-577 (AAADFTRTHSRCGHVNPADDRYLSNPVRCDGCGAMYD) is target nucleic-acid binding (TNB). Zn(2+) is bound by residues histidine 549, cysteine 552, cysteine 569, and cysteine 572. The tract at residues 578-596 (QDRSFVTLMLRAATAPSNP) is ruvC-II. Mg(2+) is bound at residue aspartate 579.

The protein belongs to the CRISPR-associated DNA-binding protein Cas12m family. Binds crRNA and target dsDNA as a monomer. Mg(2+) serves as cofactor. It depends on Zn(2+) as a cofactor.

In terms of biological role, CRISPR (clustered regularly interspaced short palindromic repeat), is an adaptive immune system that provides protection against mobile genetic elements (viruses, transposable elements and conjugative plasmids). CRISPR clusters contain sequences complementary to antecedent mobile elements and target invading nucleic acids. CRISPR clusters are transcribed and processed into CRISPR RNA (crRNA). Recognizes a short motif in the CRISPR repeat sequences (the 5' PAM or protospacer adjacent motif, 5'-TTN-3' in this organism) to help distinguish self versus nonself, as targets within the bacterial CRISPR locus do not have PAMs. Upon expression in E.coli as a CRISPR locus inhibits plasmid propagation when targeted to regions essential for plasmid propagation (replication origin and dnaA). The crRNA-Cas12m complex inhibits transcription from target DNA leading to gene silencing. Cas12m-crRNA binds DNA in a PAM-dependent, crRNA-guided fashion. Binds a 17-bp crRNA-ss-target DNA heteroduplex, in a 56 nucleotide crRNA. No dsDNA, ssDNA or RNA nuclease activity is seen for the crRNA-Cas12m complex. Is required to process pre-crRNA to mature crRNA without a tracrRNA. Upon expression in E.coli as a CRISPR region preferentially binds to its associated crRNA. The chain is CRISPR-associated DNA-binding protein Cas12m from Mycolicibacterium mucogenicum (Mycobacterium mucogenicum).